The following is a 478-amino-acid chain: Early growth response protein 4 (478 aa).

A disordered region spans residues 15–37 (SKPTEGCAHTSPELPRLPARDAP). 3 C2H2-type zinc fingers span residues 372–396 (FACPVESCVRTFARSDELNRHLRIH), 402–424 (FQCRICLRNFSRSDHLTTHVRTH), and 430–452 (FACDVCGRRFARSDEKKRHSKVH).

This sequence belongs to the EGR C2H2-type zinc-finger protein family.

The protein localises to the nucleus. Transcriptional regulator. Recognizes and binds to the DNA sequence 5'-GCGGGGGCG-3' (GSG). Activates the transcription of target genes whose products are required for mitogenesis and differentiation. This chain is Early growth response protein 4 (Egr4), found in Rattus norvegicus (Rat).